We begin with the raw amino-acid sequence, 310 residues long: p-hydroxybenzoic acid efflux pump subunit AaeA (310 aa).

A helical membrane pass occupies residues A12–Y32.

The protein belongs to the membrane fusion protein (MFP) (TC 8.A.1) family.

It is found in the cell inner membrane. In terms of biological role, forms an efflux pump with AaeB. The chain is p-hydroxybenzoic acid efflux pump subunit AaeA from Citrobacter koseri (strain ATCC BAA-895 / CDC 4225-83 / SGSC4696).